The chain runs to 108 residues: Universal stress protein Slr1101 (108 aa).

Belongs to the universal stress protein A family.

This is Universal stress protein Slr1101 from Synechocystis sp. (strain ATCC 27184 / PCC 6803 / Kazusa).